We begin with the raw amino-acid sequence, 282 residues long: Shikimate dehydrogenase (NADP(+)) (282 aa).

Shikimate-binding positions include 19 to 21 and Thr66; that span reads SFS. Lys70 serves as the catalytic Proton acceptor. Residues Asn91 and Asp106 each contribute to the shikimate site. NADP(+) contacts are provided by residues 130-134, 152-157, Thr196, Met200, and Leu224; these read GAGGA and NRTVEK. Residue Tyr226 coordinates shikimate. Gly247 contributes to the NADP(+) binding site.

It belongs to the shikimate dehydrogenase family. In terms of assembly, homodimer.

The catalysed reaction is shikimate + NADP(+) = 3-dehydroshikimate + NADPH + H(+). It participates in metabolic intermediate biosynthesis; chorismate biosynthesis; chorismate from D-erythrose 4-phosphate and phosphoenolpyruvate: step 4/7. Involved in the biosynthesis of the chorismate, which leads to the biosynthesis of aromatic amino acids. Catalyzes the reversible NADPH linked reduction of 3-dehydroshikimate (DHSA) to yield shikimate (SA). The chain is Shikimate dehydrogenase (NADP(+)) from Methanocaldococcus jannaschii (strain ATCC 43067 / DSM 2661 / JAL-1 / JCM 10045 / NBRC 100440) (Methanococcus jannaschii).